The primary structure comprises 802 residues: Endoplasmin (802 aa).

Residues 1–21 (MRALWVLGLCCVLLTFGSARA) form the signal peptide. The SRT pseudosubstrate motif signature appears at 42 to 44 (SRT). Asn62 is a glycosylation site (N-linked (GlcNAc...) asparagine). Ser64 is subject to Phosphoserine. N-linked (GlcNAc...) asparagine glycosylation is present at Asn107. Residues Asn107, Asp149, and Asn162 each coordinate ATP. At Lys168 the chain carries N6-(2-hydroxyisobutyryl)lysine. At Ser172 the chain carries Phosphoserine. Phe199 serves as a coordination point for ATP. Asn217 carries an N-linked (GlcNAc...) asparagine glycan. The segment at 288–323 (TVEEPAEEEEAAKEEKEEADDEAAVEEEEEEKKPKT) is disordered. The span at 289 to 317 (VEEPAEEEEAAKEEKEEADDEAAVEEEEE) shows a compositional bias: acidic residues. Ser403 bears the Phosphoserine mark. Lys404 bears the N6-succinyllysine mark. Asn445 carries N-linked (GlcNAc...) asparagine glycosylation. Ser447 is subject to Phosphoserine. The residue at position 479 (Lys479) is an N6-acetyllysine. N-linked (GlcNAc...) asparagine glycosylation is found at Asn481 and Asn502. Lys633 bears the N6-succinyllysine mark. The segment at 750–802 (DPDAKVEEEPEEEPEDTTEDTEQDEEEEMDAGTDEEEQEQEPEKKSTAEKDEL) is disordered. Residues 757–789 (EEPEEEPEDTTEDTEQDEEEEMDAGTDEEEQEQ) are compositionally biased toward acidic residues. A Phosphothreonine modification is found at Thr782. Residues 790–802 (EPEKKSTAEKDEL) are compositionally biased toward basic and acidic residues. The Prevents secretion from ER signature appears at 799–802 (KDEL).

The protein belongs to the heat shock protein 90 family. Homodimer; disulfide-linked. Component of an EIF2 complex at least composed of CELF1/CUGBP1, CALR, CALR3, EIF2S1, EIF2S2, HSP90B1 and HSPA5. Part of a large chaperone multiprotein complex comprising DNAJB11, HSP90B1, HSPA5, HYOU, PDIA2, PDIA4, PDIA6, PPIB, SDF2L1, UGGT1 and very small amounts of ERP29, but not, or at very low levels, CALR nor CANX. Interacts with AIMP1; regulates its retention in the endoplasmic reticulum. Hyperglycosylated form interacts with OS9; promoting its degradation by the endoplasmic reticulum associated degradation (ERAD). Interacts with CNPY3. This interaction is disrupted in the presence of ATP. Interacts with TLR4 and TLR9, but not with TLR3. Interacts with MZB1 in a calcium-dependent manner. Interacts with METTL23. Interacts with IL1B; the interaction facilitates cargo translocation into the ERGIC. Interacts with EIF2AK3. Phosphorylated by CK2. In terms of processing, N-glycosylated cotranslationally at Asn-217 by STT3A-containing OST-A complex: this glycosylation is constitutive. In response to various stress, 5 additional facultative sites (Asn-62, Asn-107, Asn-445, Asn-481 and Asn-502) can be glycosylated post-translationally by STT3B-containing OST-B complex, leading to a hyperglycosylated form that is degraded by the ER-associated degradation (ERAD) pathway. In normal conditions, the OST-A complex together with CCDC134 prevent glycosylation at facultative sites during protein folding, thereby preventing hyperglycosylation. Mechanistically, nascent HSP90B1 is tethered during translation to a specialized CCDC134-containing translocon that forms a microenvironment for its folding, in which STT3A associates with the SRT pseudosubstrate motif, and prevents access to facultative glycosylation sites until folding is completed, rendering its facultative sites inaccessible to the OST-B complex.

It localises to the endoplasmic reticulum lumen. It is found in the sarcoplasmic reticulum lumen. The protein localises to the melanosome. It catalyses the reaction ATP + H2O = ADP + phosphate + H(+). In terms of biological role, ATP-dependent chaperone involved in the processing of proteins in the endoplasmic reticulum, regulating their transport. Together with MESD, acts as a modulator of the Wnt pathway by promoting the folding of LRP6, a coreceptor of the canonical Wnt pathway. When associated with CNPY3, required for proper folding of Toll-like receptors. Promotes folding and trafficking of TLR4 to the cell surface. May participate in the unfolding of cytosolic leaderless cargos (lacking the secretion signal sequence) such as the interleukin 1/IL-1 to facilitate their translocation into the ERGIC (endoplasmic reticulum-Golgi intermediate compartment) and secretion; the translocation process is mediated by the cargo receptor TMED10. The sequence is that of Endoplasmin (HSP90B1) from Oryctolagus cuniculus (Rabbit).